A 363-amino-acid polypeptide reads, in one-letter code: Galactokinase (363 aa).

Substrate is bound at residue 16–19 (EHTD). Residues S50 and 103 to 109 (GSGLSSS) each bind ATP. 2 residues coordinate Mg(2+): S109 and E141. The active-site Proton acceptor is the D153. Residue Y205 participates in substrate binding.

This sequence belongs to the GHMP kinase family. GalK subfamily.

The protein localises to the cytoplasm. The catalysed reaction is alpha-D-galactose + ATP = alpha-D-galactose 1-phosphate + ADP + H(+). It participates in carbohydrate metabolism; galactose metabolism. In terms of biological role, catalyzes the transfer of the gamma-phosphate of ATP to D-galactose to form alpha-D-galactose-1-phosphate (Gal-1-P). This chain is Galactokinase, found in Mycobacterium tuberculosis (strain ATCC 25177 / H37Ra).